We begin with the raw amino-acid sequence, 341 residues long: Heat-inducible transcription repressor HrcA (341 aa).

The protein belongs to the HrcA family.

Negative regulator of class I heat shock genes (grpE-dnaK-dnaJ and groELS operons). Prevents heat-shock induction of these operons. The sequence is that of Heat-inducible transcription repressor HrcA from Mycobacteroides abscessus (strain ATCC 19977 / DSM 44196 / CCUG 20993 / CIP 104536 / JCM 13569 / NCTC 13031 / TMC 1543 / L948) (Mycobacterium abscessus).